A 932-amino-acid chain; its full sequence is DNA mismatch repair protein MutS (932 aa).

ATP is bound at residue 615-622 (GPNMAGKS).

The protein belongs to the DNA mismatch repair MutS family.

Functionally, this protein is involved in the repair of mismatches in DNA. It is possible that it carries out the mismatch recognition step. This protein has a weak ATPase activity. This Clostridium botulinum (strain Loch Maree / Type A3) protein is DNA mismatch repair protein MutS.